Consider the following 179-residue polypeptide: Translation initiation factor IF-3 (179 aa).

The protein belongs to the IF-3 family. In terms of assembly, monomer.

It is found in the cytoplasm. IF-3 binds to the 30S ribosomal subunit and shifts the equilibrium between 70S ribosomes and their 50S and 30S subunits in favor of the free subunits, thus enhancing the availability of 30S subunits on which protein synthesis initiation begins. This chain is Translation initiation factor IF-3, found in Leptospira borgpetersenii serovar Hardjo-bovis (strain L550).